The primary structure comprises 91 residues: Large ribosomal subunit protein bL27 (91 aa).

The protein belongs to the bacterial ribosomal protein bL27 family.

The polypeptide is Large ribosomal subunit protein bL27 (Pseudomonas savastanoi pv. phaseolicola (strain 1448A / Race 6) (Pseudomonas syringae pv. phaseolicola (strain 1448A / Race 6))).